Here is an 800-residue protein sequence, read N- to C-terminus: Chondroitin sulfate synthase 1 (800 aa).

At 1-7 (MAARGRR) the chain is on the cytoplasmic side. Residues 8–28 (AWLSMLLGLVLGFVLASRLVL) form a helical; Signal-anchor for type II membrane protein membrane-spanning segment. The Lumenal segment spans residues 29 to 800 (PRASELKRVG…GGSHGSARTA (772 aa)). The tract at residues 36-66 (RVGPRRRPSPEGCRPGQEASQPGGARGDARG) is disordered. Residues asparagine 188 and asparagine 622 are each glycosylated (N-linked (GlcNAc...) asparagine). Residues aspartate 632 and histidine 746 each contribute to the a divalent metal cation site.

This sequence belongs to the chondroitin N-acetylgalactosaminyltransferase family. Co(2+) serves as cofactor. It depends on Mn(2+) as a cofactor. Cd(2+) is required as a cofactor.

The protein resides in the golgi apparatus. It is found in the golgi stack membrane. Its subcellular location is the secreted. The enzyme catalyses 3-O-(beta-D-GlcA-(1-&gt;3)-beta-D-GalNAc-(1-&gt;4)-beta-D-GlcA-(1-&gt;3)-beta-D-Gal-(1-&gt;3)-beta-D-Gal-(1-&gt;4)-beta-D-Xyl)-L-seryl-[protein] + UDP-N-acetyl-alpha-D-galactosamine = 3-O-(beta-D-GalNAc-(1-&gt;4)-beta-D-GlcA-(1-&gt;3)-beta-D-GalNAc-(1-&gt;4)-beta-D-GlcA-(1-&gt;3)-beta-D-Gal-(1-&gt;3)-beta-D-Gal-(1-&gt;4)-beta-D-Xyl)-L-seryl-[protein] + UDP + H(+). It catalyses the reaction 3-O-{beta-D-GlcA-(1-&gt;3)-[beta-D-GalNAc-(1-&gt;4)-beta-D-GlcA-(1-&gt;3)](n)-beta-D-GalNAc-(1-&gt;4)-beta-D-GlcA-(1-&gt;3)-beta-D-Gal-(1-&gt;3)-beta-D-Gal-(1-&gt;4)-beta-D-Xyl}-L-seryl-[protein] + UDP-N-acetyl-alpha-D-galactosamine = 3-O-{[beta-D-GalNAc-(1-&gt;4)-beta-D-GlcA-(1-&gt;3)](n+1)-beta-D-GalNAc-(1-&gt;4)-beta-D-GlcA-(1-&gt;3)-beta-D-Gal-(1-&gt;3)-beta-D-Gal-(1-&gt;4)-beta-D-Xyl}-L-seryl-[protein] + UDP + H(+). It carries out the reaction 3-O-(beta-D-GalNAc-(1-&gt;4)-beta-D-GlcA-(1-&gt;3)-beta-D-Gal-(1-&gt;3)-beta-D-Gal-(1-&gt;4)-beta-D-Xyl)-L-seryl-[protein] + UDP-alpha-D-glucuronate = 3-O-(beta-D-GlcA-(1-&gt;3)-beta-D-GalNAc-(1-&gt;4)-beta-D-GlcA-(1-&gt;3)-beta-D-Gal-(1-&gt;3)-beta-D-Gal-(1-&gt;4)-beta-D-Xyl)-L-seryl-[protein] + UDP + H(+). The catalysed reaction is 3-O-{[beta-D-GalNAc-(1-&gt;4)-beta-D-GlcA-(1-&gt;3)](n)-beta-D-GalNAc-(1-&gt;4)-beta-D-GlcA-(1-&gt;3)-beta-D-Gal-(1-&gt;3)-beta-D-Gal-(1-&gt;4)-beta-D-Xyl}-L-seryl-[protein] + UDP-alpha-D-glucuronate = 3-O-{beta-D-GlcA-(1-&gt;3)-[beta-D-GalNAc-(1-&gt;4)-beta-D-GlcA-(1-&gt;3)](n)-beta-D-GalNAc-(1-&gt;4)-beta-D-GlcA-(1-&gt;3)-beta-D-Gal-(1-&gt;3)-beta-D-Gal-(1-&gt;4)-beta-D-Xyl}-L-seryl-[protein] + UDP + H(+). Its function is as follows. Has both beta-1,3-glucuronic acid and beta-1,4-N-acetylgalactosamine transferase activity. Transfers glucuronic acid (GlcUA) from UDP-GlcUA and N-acetylgalactosamine (GalNAc) from UDP-GalNAc to the non-reducing end of the elongating chondroitin polymer. Involved in the negative control of osteogenesis likely through the modulation of NOTCH signaling. The sequence is that of Chondroitin sulfate synthase 1 (Chsy1) from Mus musculus (Mouse).